Reading from the N-terminus, the 407-residue chain is Shaggy-related protein kinase GSK1 (407 aa).

Over residues 1–19 (MEAPPGPEPMELDAPPPPA) the composition is skewed to pro residues. The tract at residues 1–21 (MEAPPGPEPMELDAPPPPAAV) is disordered. One can recognise a Protein kinase domain in the interval 68–352 (YMAERVVGTG…ALDACAHSFF (285 aa)). Residues 74–82 (VGTGSFGIV) and Lys-97 each bind ATP. The active-site Proton acceptor is Asp-193.

The protein belongs to the protein kinase superfamily. CMGC Ser/Thr protein kinase family. GSK-3 subfamily. In terms of assembly, interacts with LIC. Highly expressed in the entire young panicles, spikelets, awns, vascular bundles of palea and lemma, stigma and rachilla. Expressed in root tips, root hairs, lamina joint in the collar region, vascular bundles of coleoptiles.

The enzyme catalyses L-seryl-[protein] + ATP = O-phospho-L-seryl-[protein] + ADP + H(+). It catalyses the reaction L-threonyl-[protein] + ATP = O-phospho-L-threonyl-[protein] + ADP + H(+). In terms of biological role, probable serine-threonine kinase that may act as a negative regulator of brassinosteroid (BR) signaling during flower development. May have physiological roles in stress signal-transduction pathways. Phosphorylates LIC in response to BR perception. This chain is Shaggy-related protein kinase GSK1, found in Oryza sativa subsp. japonica (Rice).